The following is a 274-amino-acid chain: Sulfur carrier protein FdhD (274 aa).

The Cysteine persulfide intermediate role is filled by Cys121. Position 258 to 263 (258 to 263 (FSKPGR)) interacts with Mo-bis(molybdopterin guanine dinucleotide).

The protein belongs to the FdhD family.

It is found in the cytoplasm. Functionally, required for formate dehydrogenase (FDH) activity. Acts as a sulfur carrier protein that transfers sulfur from IscS to the molybdenum cofactor prior to its insertion into FDH. In Yersinia pestis bv. Antiqua (strain Antiqua), this protein is Sulfur carrier protein FdhD.